The primary structure comprises 1870 residues: Non-reducing polyketide synthase pkgA (1870 aa).

The N-terminal acylcarrier protein transacylase domain (SAT) stretch occupies residues 40–279 (IQDLIRRLHR…SRHSALPISG (240 aa)). The Ketosynthase family 3 (KS3) domain occupies 416–838 (DAKLAVVGMA…GGNTTLLLED (423 aa)). Positions 453 to 492 (PPDRFDLDAHFDPSGEKENTTTKGSQSNRPLSRQAEQTDP) are disordered. Residues 455–472 (DRFDLDAHFDPSGEKENT) are compositionally biased toward basic and acidic residues. Residues 473–492 (TTKGSQSNRPLSRQAEQTDP) are compositionally biased toward polar residues. Active-site for beta-ketoacyl synthase activity residues include Cys577, His712, and His755. The malonyl-CoA:ACP transacylase (MAT) domain stretch occupies residues 947 to 1282 (AFSGQGCLYH…QSFASLRRGD (336 aa)). Residues 1004-1027 (RCPHRESTPSSDASHDSNTNRTST) form a disordered region. Over residues 1011 to 1027 (TPSSDASHDSNTNRTST) the composition is skewed to polar residues. Positions 1364–1704 (TSSVQQIIFE…PRALMPVLFP (341 aa)) are product template (PT) domain. An N-terminal hotdog fold region spans residues 1368–1502 (QQIIFEEYDE…ATVCYEEAQD (135 aa)). The PKS/mFAS DH domain occupies 1368-1700 (QQIIFEEYDE…FKAVPRALMP (333 aa)). His1400 serves as the catalytic Proton acceptor; for dehydratase activity. The tract at residues 1538 to 1700 (KGGPRVNNFF…FKAVPRALMP (163 aa)) is C-terminal hotdog fold. Asp1602 (proton donor; for dehydratase activity) is an active-site residue. Residues 1795 to 1870 (QSQNAQATAC…VQDLVTWLSK (76 aa)) form the Carrier domain. Ser1832 is subject to O-(pantetheine 4'-phosphoryl)serine.

Pantetheine 4'-phosphate is required as a cofactor.

It carries out the reaction holo-[ACP] + 6 malonyl-CoA + acetyl-CoA + 6 H(+) = 3,5,7,9,11,13-hexaoxotetradecanoyl-[ACP] + 6 CO2 + 7 CoA. It catalyses the reaction holo-[ACP] + 5 malonyl-CoA + acetyl-CoA + 5 H(+) = 3,5,7,9,11-pentaoxododecanoyl-[ACP] + 5 CO2 + 6 CoA. It participates in secondary metabolite biosynthesis. Its function is as follows. Non-reducing polyketide synthase; part of the pkg gene cluster that mediates the biosynthesis of dihydrocitreoisocoumarin and 6,8-dihydroxy-3-(2-oxopropyl)-isocoumarin. The non-reducing polyketide synthase pkgA performs the condensation of one acetyl-CoA starter unit with 6 and 5 malonyl-CoA units, respectively. As pkgA lacks a releasing domain, the thioesterase pkgB is necessary to break the thioester bond and release dihydrocitreoisocoumarin and 6,8-dihydroxy-3-(2-oxopropyl)-isocoumarin from pkgA. This chain is Non-reducing polyketide synthase pkgA, found in Emericella nidulans (strain FGSC A4 / ATCC 38163 / CBS 112.46 / NRRL 194 / M139) (Aspergillus nidulans).